The sequence spans 145 residues: Regulator of sigma D (145 aa).

This sequence belongs to the Rsd/AlgQ family. As to quaternary structure, interacts with RpoD.

It localises to the cytoplasm. Functionally, binds RpoD and negatively regulates RpoD-mediated transcription activation by preventing the interaction between the primary sigma factor RpoD with the catalytic core of the RNA polymerase and with promoter DNA. May be involved in replacement of the RNA polymerase sigma subunit from RpoD to RpoS during the transition from exponential growth to the stationary phase. The protein is Regulator of sigma D of Sodalis glossinidius (strain morsitans).